Here is a 291-residue protein sequence, read N- to C-terminus: Ribosomal RNA small subunit methyltransferase H (291 aa).

S-adenosyl-L-methionine-binding positions include 36–38 (GGH), D55, L88, D102, and Q109. A disordered region spans residues 268–291 (KPTQEETKNNPRARSAKLRVAERI).

It belongs to the methyltransferase superfamily. RsmH family.

The protein localises to the cytoplasm. It carries out the reaction cytidine(1402) in 16S rRNA + S-adenosyl-L-methionine = N(4)-methylcytidine(1402) in 16S rRNA + S-adenosyl-L-homocysteine + H(+). Specifically methylates the N4 position of cytidine in position 1402 (C1402) of 16S rRNA. In Thermosipho melanesiensis (strain DSM 12029 / CIP 104789 / BI429), this protein is Ribosomal RNA small subunit methyltransferase H.